The chain runs to 736 residues: Cytosolic neutral trehalase (736 aa).

The disordered stretch occupies residues 1-47 (MSEAPQARRVGSVDDHSVYDDAKTYYTSEERHNNSRSGPRQRTYSQN). Basic and acidic residues predominate over residues 11 to 33 (GSVDDHSVYDDAKTYYTSEERHN). Over residues 35–47 (SRSGPRQRTYSQN) the composition is skewed to polar residues. The Ca(2+) site is built by Asp-92, Asp-94, Asn-96, Gln-98, and Asp-103. Residues Arg-279, 286 to 287 (WD), Asn-323, 332 to 334 (RSQ), Glu-399, Arg-448, and Gly-451 contribute to the substrate site. Active-site proton donor/acceptor residues include Asp-453 and Glu-657.

It belongs to the glycosyl hydrolase 37 family. The cofactor is Ca(2+).

It is found in the cytoplasm. The enzyme catalyses alpha,alpha-trehalose + H2O = alpha-D-glucose + beta-D-glucose. Its pathway is carbohydrate degradation. In terms of biological role, hydrolyzes intracellular trehalose to glucose. Plays a role in pathogenicity, specifically in proliferation of invasive hyphae in rice blast disease. The chain is Cytosolic neutral trehalase (NTH1) from Pyricularia oryzae (strain 70-15 / ATCC MYA-4617 / FGSC 8958) (Rice blast fungus).